Here is a 288-residue protein sequence, read N- to C-terminus: Release factor glutamine methyltransferase (288 aa).

Residues 123–127 (GTGSG), D146, and N190 each bind S-adenosyl-L-methionine. 190-193 (NPPY) serves as a coordination point for substrate.

Belongs to the protein N5-glutamine methyltransferase family. PrmC subfamily.

It carries out the reaction L-glutaminyl-[peptide chain release factor] + S-adenosyl-L-methionine = N(5)-methyl-L-glutaminyl-[peptide chain release factor] + S-adenosyl-L-homocysteine + H(+). Its function is as follows. Methylates the class 1 translation termination release factors RF1/PrfA and RF2/PrfB on the glutamine residue of the universally conserved GGQ motif. The sequence is that of Release factor glutamine methyltransferase from Bacillus subtilis (strain 168).